An 89-amino-acid chain; its full sequence is Small ribosomal subunit protein uS14 (89 aa).

The disordered stretch occupies residues 32–51; sequence DYEGLQKLPKNSSPVRLHNR.

The protein belongs to the universal ribosomal protein uS14 family. Part of the 30S ribosomal subunit. Contacts proteins S3 and S10.

Functionally, binds 16S rRNA, required for the assembly of 30S particles and may also be responsible for determining the conformation of the 16S rRNA at the A site. The protein is Small ribosomal subunit protein uS14 of Christiangramia forsetii (strain DSM 17595 / CGMCC 1.15422 / KT0803) (Gramella forsetii).